A 1032-amino-acid polypeptide reads, in one-letter code: Argonaute protein hrde-1 (1032 aa).

Disordered regions lie at residues 1 to 51 and 298 to 375; these read MADL…PIGR and KLSE…YSPS. Positions 1 to 551 are required to recruit the small-RNA amplification machinery to gene targets and promote gene silencing; the sequence is MADLLDKIMG…IQMTAKLLPP (551 aa). The segment covering 18–33 has biased composition (basic and acidic residues); the sequence is PKRDNRMNQDKDEPTS. Positions 303 to 313 are enriched in gly residues; that stretch reads KGGGGGRGGYG. Basic and acidic residues-rich tracts occupy residues 315-335 and 343-364; these read SDSRDSRGGYRGGRSDSRDFR and GNDRYRDESRGRRDMYDSRRDS. One can recognise a PAZ domain in the interval 376-481; that stretch reads DAAELEHAFG…FPMELLRIAP (106 aa). In terms of domain architecture, Piwi spans 650-977; sequence DILVGIAREK…LAKRGRNNYK (328 aa).

Belongs to the argonaute family. WAGO subfamily. As to expression, expressed in the nuclei of male and female germ cells.

It localises to the cytoplasm. It is found in the cytoplasmic ribonucleoprotein granule. Its subcellular location is the nucleus. In terms of biological role, argonaute protein which is involved in the endogenous small interfering RNA (endo-siRNA) pathway and is required for RNA-mediated gene silencing (RNAi) in the germline. Interacts with secondary 22G-RNAs in an hrde-2-dependent manner; 22G-RNAs are RNA-dependent RNA polymerase-derived endo-siRNAs, typically 22 nucleotides in length with a 5'-guanosine residue. Plays a key role in transgenerational epigenetic inheritance and germline immortality. May be involved in transgenerational gene silencing both by inducing subnuclear-co-localization of target genes into heterochromatin and by activation of small RNA amplification in the nuage. The protein is Argonaute protein hrde-1 of Caenorhabditis elegans.